A 105-amino-acid chain; its full sequence is ATP synthase subunit c (105 aa).

3 helical membrane-spanning segments follow: residues 3–23 (FLALFFLALVGVAFAYDGGMD), 32–52 (SILGAMIGLGIAAFGGAIGMG), and 78–98 (VAMAMIEAQVIYTLVFAIIAI).

This sequence belongs to the ATPase C chain family. In terms of assembly, F-type ATPases have 2 components, F(1) - the catalytic core - and F(0) - the membrane proton channel. F(1) has five subunits: alpha(3), beta(3), gamma(1), delta(1), epsilon(1). F(0) has three main subunits: a(1), b(2) and c(10-14). The alpha and beta chains form an alternating ring which encloses part of the gamma chain. F(1) is attached to F(0) by a central stalk formed by the gamma and epsilon chains, while a peripheral stalk is formed by the delta and b chains.

The protein localises to the cell inner membrane. In terms of biological role, f(1)F(0) ATP synthase produces ATP from ADP in the presence of a proton or sodium gradient. F-type ATPases consist of two structural domains, F(1) containing the extramembraneous catalytic core and F(0) containing the membrane proton channel, linked together by a central stalk and a peripheral stalk. During catalysis, ATP synthesis in the catalytic domain of F(1) is coupled via a rotary mechanism of the central stalk subunits to proton translocation. Functionally, key component of the F(0) channel; it plays a direct role in translocation across the membrane. A homomeric c-ring of between 10-14 subunits forms the central stalk rotor element with the F(1) delta and epsilon subunits. The polypeptide is ATP synthase subunit c (Helicobacter acinonychis (strain Sheeba)).